The following is a 204-amino-acid chain: V-set and transmembrane domain-containing protein 2-like protein (204 aa).

A signal peptide spans 1 to 24 (MGAPLAVALGALHYLALFLQLGGA). In terms of domain architecture, Ig-like spans 41 to 158 (ALFTETPHDM…DGKARHHKVK (118 aa)). Cys-62 and Cys-142 form a disulfide bridge. Residues 168 to 204 (NSVLHLPEAPPAAPAPPPPKPGKELRKRSVDQEACSL) form a disordered region. Pro residues predominate over residues 175 to 187 (EAPPAAPAPPPPK). Residues 188 to 198 (PGKELRKRSVD) show a composition bias toward basic and acidic residues.

The protein is V-set and transmembrane domain-containing protein 2-like protein (VSTM2L) of Homo sapiens (Human).